The sequence spans 568 residues: NADH-ubiquinone oxidoreductase chain 5 (568 aa).

The next 14 membrane-spanning stretches (helical) occupy residues 7 to 27 (LGLL…SSFG), 44 to 64 (FSFS…VLVI), 90 to 110 (WLFV…MLLI), 144 to 164 (IGDV…GWLI), 165 to 185 (YSYH…FAGM), 210 to 232 (LVHS…YIIS), 240 to 260 (VLMI…VFAF), 274 to 294 (LSLM…FHLV), 297 to 317 (AVFK…NQSI), 334 to 354 (MGAM…SGFF), 378 to 398 (LLGL…VMLG), 426 to 446 (AIIL…VVVL), 452 to 472 (LSVF…ISKL), and 547 to 567 (FTYQ…LIIF).

It belongs to the complex I subunit 5 family.

The protein localises to the mitochondrion inner membrane. It carries out the reaction a ubiquinone + NADH + 5 H(+)(in) = a ubiquinol + NAD(+) + 4 H(+)(out). In terms of biological role, core subunit of the mitochondrial membrane respiratory chain NADH dehydrogenase (Complex I) that is believed to belong to the minimal assembly required for catalysis. Complex I functions in the transfer of electrons from NADH to the respiratory chain. The immediate electron acceptor for the enzyme is believed to be ubiquinone. The sequence is that of NADH-ubiquinone oxidoreductase chain 5 (ND5) from Mytilus edulis (Blue mussel).